The primary structure comprises 1547 residues: Transposon Ty3-G Gag-Pol polyprotein (1547 aa).

Residue Ser2 is modified to N-acetylserine. The segment at 265–282 (RLCFYCKKEGHRLNECRA) adopts a CCHC-type zinc-finger fold. Asp336 serves as the catalytic For protease activity; shared with dimeric partner. In terms of domain architecture, Reverse transcriptase spans 620-797 (LDNKFIVPSK…EETEFLGYSI (178 aa)). The Mg(2+) site is built by Asp686, Asp748, Asp749, Asp893, Glu936, and Asp961. Positions 893-1011 (DASKDGIGAV…VADAISRAVY (119 aa)) constitute an RNase H Ty3/gyspy-type domain. The tract at residues 1106 to 1145 (HTLFGGHFGVTVTLAKISPIYYWPKLQHSIIQYIRTCVQC) is integrase-type zinc finger-like. An Integrase catalytic domain is found at 1159–1324 (LQPLPIAEGR…SPFEIDLGYL (166 aa)). The Mg(2+) site is built by Asp1175 and Asp1236.

The protease is a homodimer, whose active site consists of two apposed aspartic acid residues. Post-translationally, initially, virus-like particles (VLPs) are composed of the structural unprocessed proteins Gag and Gag-Pol, and also contain the host initiator methionine tRNA (tRNA(i)-Met) which serves as a primer for minus-strand DNA synthesis, and a dimer of genomic Ty RNA. Processing of the polyproteins occurs within the particle and proceeds by an ordered pathway, called maturation. First, the protease (PR) is released by autocatalytic cleavage of the Gag-Pol polyprotein, and this cleavage is a prerequisite for subsequent processing at the remaining sites to release the mature structural and catalytic proteins. Maturation takes place prior to the RT reaction and is required to produce transposition-competent VLPs.

It is found in the cytoplasm. The protein resides in the nucleus. It carries out the reaction DNA(n) + a 2'-deoxyribonucleoside 5'-triphosphate = DNA(n+1) + diphosphate. It catalyses the reaction Endonucleolytic cleavage to 5'-phosphomonoester.. Functionally, capsid protein (CA) is the structural component of the virus-like particle (VLP), forming the shell that encapsulates the genomic RNA-nucleocapsid complex. In terms of biological role, nucleocapsid protein p11 (NC) forms the nucleocore that coats the retro-elements dimeric RNA. Binds these RNAs through its zinc fingers. Promotes primer tRNA(i)-Met annealing to the multipartite primer-binding site (PBS), dimerization of Ty3 RNA and initiation of reverse transcription. Its function is as follows. The aspartyl protease (PR) mediates the proteolytic cleavages of the Gag and Gag-Pol polyproteins after assembly of the VLP. Reverse transcriptase/ribonuclease H (RT) is a multifunctional enzyme that catalyzes the conversion of the retro-elements RNA genome into dsDNA within the VLP. The enzyme displays a DNA polymerase activity that can copy either DNA or RNA templates, and a ribonuclease H (RNase H) activity that cleaves the RNA strand of RNA-DNA heteroduplexes during plus-strand synthesis and hydrolyzes RNA primers. The conversion leads to a linear dsDNA copy of the retrotransposon that includes long terminal repeats (LTRs) at both ends. Functionally, integrase (IN) targets the VLP to the nucleus, where a subparticle preintegration complex (PIC) containing at least integrase and the newly synthesized dsDNA copy of the retrotransposon must transit the nuclear membrane. Once in the nucleus, integrase performs the integration of the dsDNA into the host genome. This chain is Transposon Ty3-G Gag-Pol polyprotein (TY3B-G), found in Saccharomyces cerevisiae (strain ATCC 204508 / S288c) (Baker's yeast).